The primary structure comprises 264 residues: 5'-nucleotidase SurE (264 aa).

The a divalent metal cation site is built by aspartate 8, aspartate 9, serine 39, and asparagine 95.

It belongs to the SurE nucleotidase family. Requires a divalent metal cation as cofactor.

The protein resides in the cytoplasm. It catalyses the reaction a ribonucleoside 5'-phosphate + H2O = a ribonucleoside + phosphate. Its function is as follows. Nucleotidase that shows phosphatase activity on nucleoside 5'-monophosphates. This is 5'-nucleotidase SurE from Syntrophomonas wolfei subsp. wolfei (strain DSM 2245B / Goettingen).